The sequence spans 169 residues: Peptide deformylase (169 aa).

Fe cation contacts are provided by Cys-91 and His-133. The active site involves Glu-134. A Fe cation-binding site is contributed by His-137.

This sequence belongs to the polypeptide deformylase family. Requires Fe(2+) as cofactor.

It catalyses the reaction N-terminal N-formyl-L-methionyl-[peptide] + H2O = N-terminal L-methionyl-[peptide] + formate. Its function is as follows. Removes the formyl group from the N-terminal Met of newly synthesized proteins. Requires at least a dipeptide for an efficient rate of reaction. N-terminal L-methionine is a prerequisite for activity but the enzyme has broad specificity at other positions. The chain is Peptide deformylase from Salmonella agona (strain SL483).